We begin with the raw amino-acid sequence, 272 residues long: Glutamate 5-kinase (272 aa).

Lysine 14 contacts ATP. Substrate-binding residues include serine 54, aspartate 141, and asparagine 157. ATP is bound by residues 177-178 and 219-225; these read SD and TGGMLSK.

This sequence belongs to the glutamate 5-kinase family.

The protein localises to the cytoplasm. It catalyses the reaction L-glutamate + ATP = L-glutamyl 5-phosphate + ADP. It functions in the pathway amino-acid biosynthesis; L-proline biosynthesis; L-glutamate 5-semialdehyde from L-glutamate: step 1/2. In terms of biological role, catalyzes the transfer of a phosphate group to glutamate to form L-glutamate 5-phosphate. This Streptococcus pyogenes serotype M28 (strain MGAS6180) protein is Glutamate 5-kinase.